The sequence spans 146 residues: Hemoglobin subunit beta-1 (146 aa).

The Globin domain occupies 2–146; it reads GLTAHDRQLI…IADALGKGYH (145 aa). Residues H63 and H92 each coordinate heme b.

Belongs to the globin family. Heterotetramer of two alpha chains and two beta chains. In terms of tissue distribution, red blood cells.

Functionally, involved in oxygen transport from the lung to the various peripheral tissues. The protein is Hemoglobin subunit beta-1 (hbb1) of Xenopus borealis (Kenyan clawed frog).